Here is a 235-residue protein sequence, read N- to C-terminus: Phosphoribosylaminoimidazole-succinocarboxamide synthase (235 aa).

This sequence belongs to the SAICAR synthetase family.

The enzyme catalyses 5-amino-1-(5-phospho-D-ribosyl)imidazole-4-carboxylate + L-aspartate + ATP = (2S)-2-[5-amino-1-(5-phospho-beta-D-ribosyl)imidazole-4-carboxamido]succinate + ADP + phosphate + 2 H(+). The protein operates within purine metabolism; IMP biosynthesis via de novo pathway; 5-amino-1-(5-phospho-D-ribosyl)imidazole-4-carboxamide from 5-amino-1-(5-phospho-D-ribosyl)imidazole-4-carboxylate: step 1/2. The sequence is that of Phosphoribosylaminoimidazole-succinocarboxamide synthase from Streptococcus agalactiae serotype Ia (strain ATCC 27591 / A909 / CDC SS700).